The chain runs to 211 residues: 2,3-bisphosphoglycerate-dependent phosphoglycerate mutase (211 aa).

Substrate-binding positions include 9–16, 22–23, Arg61, 88–91, Lys99, 115–116, and 159–160; these read RHGQSDWN, TG, ERDY, RR, and GN. The active-site Tele-phosphohistidine intermediate is the His10. Residue Glu88 is the Proton donor/acceptor of the active site.

This sequence belongs to the phosphoglycerate mutase family. BPG-dependent PGAM subfamily. Homodimer.

The enzyme catalyses (2R)-2-phosphoglycerate = (2R)-3-phosphoglycerate. It participates in carbohydrate degradation; glycolysis; pyruvate from D-glyceraldehyde 3-phosphate: step 3/5. Functionally, catalyzes the interconversion of 2-phosphoglycerate and 3-phosphoglycerate. In Rhizobium etli (strain CIAT 652), this protein is 2,3-bisphosphoglycerate-dependent phosphoglycerate mutase.